The primary structure comprises 169 residues: Probable prefoldin subunit 3 (169 aa).

Belongs to the prefoldin subunit alpha family. As to quaternary structure, heterohexamer of two PFD-alpha type and four PFD-beta type subunits.

In terms of biological role, binds specifically to cytosolic chaperonin (c-CPN) and transfers target proteins to it. Binds to nascent polypeptide chain and promotes folding in an environment in which there are many competing pathways for nonnative proteins. This chain is Probable prefoldin subunit 3, found in Schizosaccharomyces pombe (strain 972 / ATCC 24843) (Fission yeast).